A 135-amino-acid chain; its full sequence is Large ribosomal subunit protein uL16c (135 aa).

A disordered region spans residues 1–20 (MLSPKRTRFRKQHRGRMKGK).

The protein belongs to the universal ribosomal protein uL16 family. Part of the 50S ribosomal subunit.

The protein localises to the plastid. The protein resides in the chloroplast. The protein is Large ribosomal subunit protein uL16c of Landoltia punctata (Dotted duckmeat).